Reading from the N-terminus, the 481-residue chain is Glutamyl-tRNA(Gln) amidotransferase subunit A (481 aa).

Residues lysine 74 and serine 149 each act as charge relay system in the active site. Serine 173 functions as the Acyl-ester intermediate in the catalytic mechanism.

It belongs to the amidase family. GatA subfamily. Heterotrimer of A, B and C subunits.

The catalysed reaction is L-glutamyl-tRNA(Gln) + L-glutamine + ATP + H2O = L-glutaminyl-tRNA(Gln) + L-glutamate + ADP + phosphate + H(+). Allows the formation of correctly charged Gln-tRNA(Gln) through the transamidation of misacylated Glu-tRNA(Gln) in organisms which lack glutaminyl-tRNA synthetase. The reaction takes place in the presence of glutamine and ATP through an activated gamma-phospho-Glu-tRNA(Gln). This chain is Glutamyl-tRNA(Gln) amidotransferase subunit A, found in Francisella tularensis subsp. holarctica (strain FTNF002-00 / FTA).